The chain runs to 379 residues: Stimulator of interferon genes protein (379 aa).

Residues 1 to 23 (MPQDPSTRSSPARLLIPEPRAGR) lie on the Cytoplasmic side of the membrane. A helical transmembrane segment spans residues 24–40 (ARHAACVLLAVCFVVLF). Over 41 to 50 (LSGEPLAPII) the chain is Lumenal. The chain crosses the membrane as a helical span at residues 51–75 (RSVCTQLAALQLGVLLKGCCCLAEE). Over 76-97 (IFHLHSRHHGSLWQVLCSCFPP) the chain is Cytoplasmic. The chain crosses the membrane as a helical span at residues 98-111 (RWYLALLLVGGSAY). At 112–121 (LDPPEDNGHS) the chain is on the lumenal side. A helical transmembrane segment spans residues 122-139 (PRLALTLSCLCQLLVLAL). The Cytoplasmic portion of the chain corresponds to 140–379 (GLQKLSAVEV…LPQPLRSDCP (240 aa)). Residues 158–345 (KNVAHGLAWS…WHLQQQQREE (188 aa)) are cyclic dinucleotide-binding domain (CBD). Residues serine 167, tyrosine 172, 243 to 246 (RVYK), and serine 268 each bind 3',3'-c-di-GMP. 2',3'-cGAMP contacts are provided by residues 167 to 172 (SYYIGY), 243 to 246 (RVYK), and serine 268. A pLxIS motif motif is present at residues 363 to 366 (LQVS). Position 366 is a phosphoserine; by TBK1 (serine 366).

It belongs to the STING family. Homodimer; forms a homodimer in absence of cyclic nucleotide (c-di-GMP or cGAMP). Homotetramer; in presence of cyclic nucleotide (c-di-GMP or cGAMP), forms tetramers and higher-order oligomers through side-by-side packing. Interacts (when phosphorylated) with IRF3; following activation and phosphorylation on the pLxIS motif by TBK1, recruits IRF3. Phosphorylation by TBK1 leads to activation and production of IFN-beta. Following cyclic nucleotide (c-di-GMP or cGAMP)-binding, activation and translocation from the endoplasmic reticulum, STING1 is phosphorylated by TBK1 at Ser-366 in the pLxIS motif. The phosphorylated pLxIS motif constitutes an IRF3-binding motif, leading to recruitment of the transcription factor IRF3 to induce type-I interferons and other cytokines.

It localises to the endoplasmic reticulum membrane. The protein resides in the cytoplasm. The protein localises to the perinuclear region. Its subcellular location is the endoplasmic reticulum-Golgi intermediate compartment membrane. It is found in the golgi apparatus membrane. It localises to the cytoplasmic vesicle. The protein resides in the autophagosome membrane. It catalyses the reaction H(+)(in) = H(+)(out). Functionally, facilitator of innate immune signaling that acts as a sensor of cytosolic DNA from bacteria and viruses and promotes the production of type I interferon (IFN-alpha and IFN-beta). Innate immune response is triggered in response to non-CpG double-stranded DNA from viruses and bacteria delivered to the cytoplasm. Acts by binding cyclic dinucleotides: recognizes and binds cyclic di-GMP (c-di-GMP), a second messenger produced by bacteria, and cyclic GMP-AMP (cGAMP), a messenger produced by CGAS in response to DNA virus in the cytosol. Upon binding of c-di-GMP or cGAMP, STING1 oligomerizes and is able to activate both NF-kappa-B and IRF3 transcription pathways to induce expression of type I interferon and exert a potent anti-viral state. Exhibits 2',3' phosphodiester linkage-specific ligand recognition: can bind both 2'-3' linked cGAMP and 3'-3' linked cGAMP but is preferentially activated by 2'-3' linked cGAMP. In addition to promote the production of type I interferons, plays a direct role in autophagy. Following cGAMP-binding, STING1 buds from the endoplasmic reticulum into COPII vesicles, which then form the endoplasmic reticulum-Golgi intermediate compartment (ERGIC). The ERGIC serves as the membrane source for LC3 lipidation, leading to formation of autophagosomes that target cytosolic DNA or DNA viruses for degradation by the lysosome. Promotes autophagy by acting as a proton channel that directs proton efflux from the Golgi to facilitate LC3 lipidation. The autophagy- and interferon-inducing activities can be uncoupled and autophagy induction is independent of TBK1 phosphorylation. In Gallus gallus (Chicken), this protein is Stimulator of interferon genes protein.